The primary structure comprises 105 residues: U-scoloptoxin(10)-Sm3a (105 aa).

The signal sequence occupies residues 1–23 (MYKFIFIFFTVFFLINIIEESXT).

Belongs to the scoloptoxin-10 family. Contains 3 disulfide bonds. Expressed by the venom gland.

The protein localises to the secreted. This Scolopendra morsitans (Tanzanian blue ringleg centipede) protein is U-scoloptoxin(10)-Sm3a.